Reading from the N-terminus, the 672-residue chain is MANLIRTDHQQHIPKKRKRGESRVFRLKTFGESGHPAEMNELSFRDNLAKLLEFGHFESSGLMGSWSFQLEIQRNPNPLYVLLFVVEEPIEASLNLRCNHCQYVGWGNQMICNKKYHFVIPSKETMAAFLKLEGGGYAFPEKESFSHLVELQGHVLHGFFHSNGFGHLLSLNGIETGSDLTGHQVMDLWDRLCTGLKARKIGLNDASHKKGMELRLLHGVAKGEPWFGRWGYRFGSGTYGVTQKIYEKALESVRNIPLCLLNHHLTSLNRETPILLSKYQSLSTEPLITLSDLFRFMLHLHSRLPRDNYMSNSRNQIISIDSTNCRWSQKRIQMAIKVVIESLKRVEYRWISRQEVRDAARNYIGDTGLLDFVLKSLGNQVVGNYLVRRSLNPVKKVLEYSLEDISNLLPSSNNELITLQNQNSMGKMATNGHNKITRGQVMKDMFYFYKHILMDYKGVLGPIGGILNQIGMASRAILDAKYFIKEYHYIRDTSAKTLHLDRGEELGIFCTIAWKCHHHNNEIKVPPQECIVVKKDATLSEVYGEAERVFRDIYWELRDVVVESVVGGQIEITRVDEMALNGNKGLVLEGNVGMMMNIEVTKCYEDDDKKKDKRIECECGATEEDGERMVCCDICEVWQHTRCVGVQHNEEVPRIFLCQSCDQHLIPLSFLP.

The PHD-type zinc finger occupies arginine 614–histidine 664.

In terms of tissue distribution, in closed flower buds, especially in anthers.

The protein localises to the nucleus. In terms of biological role, transcriptional activator required for anther and post-meiotic pollen development and maturation. Seems to regulate inflorescence branching and floral development. May control tapetal development by directly regulating tapetal programmed cell death (PCD) and breakdown. Implicated in pollen cytosolic components and wall development (e.g. exine and intine formation). This Arabidopsis thaliana (Mouse-ear cress) protein is PHD finger protein MALE STERILITY 1 (MS1).